The primary structure comprises 179 residues: Translation initiation factor IF-3 (179 aa).

Belongs to the IF-3 family. Monomer.

The protein resides in the cytoplasm. Functionally, IF-3 binds to the 30S ribosomal subunit and shifts the equilibrium between 70S ribosomes and their 50S and 30S subunits in favor of the free subunits, thus enhancing the availability of 30S subunits on which protein synthesis initiation begins. The chain is Translation initiation factor IF-3 from Leptospira borgpetersenii serovar Hardjo-bovis (strain L550).